Reading from the N-terminus, the 309-residue chain is Probable manganese-dependent inorganic pyrophosphatase (309 aa).

Mn(2+) is bound by residues histidine 9, aspartate 13, aspartate 15, aspartate 75, histidine 97, and aspartate 149.

The protein belongs to the PPase class C family. It depends on Mn(2+) as a cofactor.

The protein resides in the cytoplasm. The catalysed reaction is diphosphate + H2O = 2 phosphate + H(+). This Bacillus cereus (strain G9842) protein is Probable manganese-dependent inorganic pyrophosphatase.